A 191-amino-acid polypeptide reads, in one-letter code: Adenylate kinase (191 aa).

12-17 (GSGKTT) serves as a coordination point for ATP. The interval 34-63 (STGDLLRAESAKKTERGLLIEKFTSQGELV) is NMP. AMP is bound by residues Thr-35, Arg-40, 61–63 (ELV), 88–91 (GYPR), and Gln-95. Positions 130–136 (GRSRGAD) are LID. An ATP-binding site is contributed by Arg-131. Arg-133 and Arg-145 together coordinate AMP. Arg-173 is an ATP binding site.

Belongs to the adenylate kinase family. Monomer.

Its subcellular location is the cytoplasm. It carries out the reaction AMP + ATP = 2 ADP. The protein operates within purine metabolism; AMP biosynthesis via salvage pathway; AMP from ADP: step 1/1. Its function is as follows. Catalyzes the reversible transfer of the terminal phosphate group between ATP and AMP. Plays an important role in cellular energy homeostasis and in adenine nucleotide metabolism. The polypeptide is Adenylate kinase (Helicobacter pylori (strain HPAG1)).